The primary structure comprises 1456 residues: DNA polymerase gamma, mitochondrial (1456 aa).

Residues 1-41 (MLTPVRCRTVPNATVATAARVLRRANLFSRYPRQLGHLRWD) constitute a mitochondrion transit peptide. Disordered regions lie at residues 1200–1266 (APEM…SLDD) and 1308–1443 (AVTT…SWKP). Residues 1204 to 1239 (AAVPSTSSESKSKASATTSTTTTENATASPSSSSNV) are compositionally biased toward low complexity. Over residues 1315-1325 (PEPPTNPPPVA) the composition is skewed to pro residues. Low complexity-rich tracts occupy residues 1346–1371 (PKNPTPTLTPTTKKSNPTSTPTTPKP) and 1411–1428 (TASVGGRATTTTATATAT).

Belongs to the DNA polymerase type-A family. It depends on Mg(2+) as a cofactor.

It is found in the mitochondrion. It carries out the reaction DNA(n) + a 2'-deoxyribonucleoside 5'-triphosphate = DNA(n+1) + diphosphate. Involved in the replication of mitochondrial DNA. The chain is DNA polymerase gamma, mitochondrial (mip-1) from Neurospora crassa (strain ATCC 24698 / 74-OR23-1A / CBS 708.71 / DSM 1257 / FGSC 987).